Consider the following 255-residue polypeptide: Reaction center protein L chain (255 aa).

3 helical membrane passes run 12-35, 64-92, and 95-120; these read GFFG…GTAL, GLWQ…RKLG, and LHIP…LLLG. Residues histidine 133 and histidine 153 each contribute to the (7R,8Z)-bacteriochlorophyll b site. Residues 150–179 traverse the membrane as a helical segment; it reads NPAHMIGITFFFTNCMAFGMHGSIILSVLN. Fe cation is bound at residue histidine 170. A ubiquinone is bound at residue phenylalanine 196. A helical transmembrane segment spans residues 205–231; that stretch reads GTLGIHRLGVFLAISAAFWSAVCIILS. Fe cation is bound at residue histidine 210.

This sequence belongs to the reaction center PufL/M/PsbA/D family. As to quaternary structure, reaction center is composed of four bacteriochlorophylls, two bacteriopheophytins, two ubiquinones, one iron, and three highly hydrophobic polypeptide chains (designated L, M, and H).

The protein resides in the cellular chromatophore membrane. The reaction center is a membrane-bound complex that mediates the initial photochemical event in the electron transfer process of photosynthesis. The chain is Reaction center protein L chain (pufL) from Pararhodospirillum photometricum (Rhodospirillum photometricum).